The primary structure comprises 208 residues: MERGNVWRSGRAEIETKAAFGSVKEAVAMFGEKVLAGEIYATRLREIRTKETNSTPSSLSRLPSLTLELEQTKQTLTRTLQLNTSLSNRIKTLTQELELGKKEIQRLSRTRSSRLDNPEIEELKFVEQHQTMTSNDFEEEVVTTEELEKRRLVTFASSPLLTRVMSSVGDEEERNKKEKDFERDCSVKKTKLKKGFAPFMGWFRATRG.

Positions 78 to 113 (RTLQLNTSLSNRIKTLTQELELGKKEIQRLSRTRSS) form a coiled coil.

Belongs to the WEB family.

The sequence is that of WEB family protein At2g17940 from Arabidopsis thaliana (Mouse-ear cress).